The chain runs to 469 residues: Protein RUFY3 (469 aa).

2 positions are modified to phosphothreonine: threonine 5 and threonine 12. 2 positions are modified to phosphoserine: serine 34 and serine 49. At threonine 51 the chain carries Phosphothreonine. The 133-residue stretch at 95-227 folds into the RUN domain; it reads DSDYAPLQQF…IDANFCMKGE (133 aa). 2 coiled-coil regions span residues 271–362 and 422–463; these read NRHL…VEKE and KSEL…AANK.

As to quaternary structure, interacts with PAK1. Interacts (via C-terminus) with Ras-related Rab-5 proteins. Interacts (via C-terminus) with Ras-related Rap-2 proteins. Interacts with PIK3CA and PIK3R1. Interacts (via N-terminus) with FSCN1; this interaction induces neuron axon development. Interacts with DBN1. Interacts (via the second coiled coil) with GTP-, but not GDP-bound ARL8A and ARL8B. Interacts with dynactin/DCTN1 and the dynein intermediate chain DYNC1I1/2. Directly interacts with DYNC1LI1. Phosphorylated by PAK1.

It is found in the cytoplasm. Its subcellular location is the endomembrane system. The protein resides in the cell projection. It localises to the invadopodium. The protein localises to the growth cone. It is found in the perikaryon. Its subcellular location is the filopodium. The protein resides in the lamellipodium. It localises to the lysosome. ARL8 effector that promotes the coupling of endolysosomes to dynein-dynactin for retrograde transport along microtubules. Acts by binding both GTP-bound ARL8 and dynein-dynactin. In nonneuronal cells, promotes concentration of endolysosomes in the juxtanuclear area. In hippocampal neurons, drives retrograde transport of endolysosomes from the axon to the soma. Plays a role in the generation of neuronal polarity formation and axon growth. Implicated in the formation of a single axon by developing neurons. May inhibit the formation of additional axons by inhibition of PI3K in minor neuronal processes. Plays a role in the formation of F-actin-enriched protrusive structures at the cell periphery. Plays a role in cytoskeletal organization by regulating the subcellular localization of FSCN1 and DBN1 at axonal growth cones. This Pongo abelii (Sumatran orangutan) protein is Protein RUFY3.